Consider the following 272-residue polypeptide: Sugar-phosphatase AraL (272 aa).

It belongs to the HAD-like hydrolase superfamily. The cofactor is Mg(2+).

It catalyses the reaction sugar phosphate + H2O = sugar + phosphate.. The catalysed reaction is O-phospho-L-serine + H2O = L-serine + phosphate. It carries out the reaction O-phospho-D-serine + H2O = D-serine + phosphate. Its function is as follows. Catalyzes the dephosphorylation of C5 and C6 carbon sugars in vitro. Catalyzes the dephosphorylation of 3'-AMP and phosphoserine in vitro. This is Sugar-phosphatase AraL (araL) from Bacillus subtilis (strain 168).